A 651-amino-acid chain; its full sequence is Lateral signaling target protein 2 (651 aa).

The tract at residues 294 to 425 (VPEDSSSKLT…KENEEDVDEQ (132 aa)) is disordered. A compositionally biased stretch (polar residues) spans 300-310 (SKLTMSDFRTN). Residues 345–363 (SEATSLASSGLTSPSSGSE) are compositionally biased toward low complexity. The span at 373–394 (SDEELDDDVIETASSEENESDS) shows a compositional bias: acidic residues. A compositionally biased stretch (low complexity) spans 395 to 412 (NNENVEMVASSGDSSETE). An FYVE-type zinc finger spans residues 557–617 (DEDCEQCTAC…VCNLCYVHRL (61 aa)). The Zn(2+) site is built by Cys563, Cys566, Cys579, Cys582, Cys587, Cys590, Cys609, and Cys612.

The protein belongs to the lst-2 family.

Functionally, negative regulator of epidermal growth factor receptor (EGFR) signaling. This is Lateral signaling target protein 2 (lst-2) from Caenorhabditis briggsae.